The sequence spans 329 residues: Meiotic drive suppressor wtf21 (329 aa).

The disordered stretch occupies residues 1–68; it reads MKNNYTSLKS…RENNPSRSTD (68 aa). Residues 19 to 30 show a composition bias toward basic and acidic residues; that stretch reads KTDHEIDLEKGP. Helical transmembrane passes span 73–95, 110–132, 165–182, 192–214, and 290–312; these read FLIK…ICYL, WTLF…YFYE, IIIW…FVYI, ALIC…VCIP, and GIAF…IRGA.

Belongs to the WTF family. As to quaternary structure, homomer. Interacts with other proteins that exhibit high sequence similarity.

The protein localises to the spore membrane. Its subcellular location is the vacuole membrane. Functionally, acts as a suppressor component of the dual wtf meiotic drive system, and can suppress but not confer meiotic drive by compatible poisons. Wtf meiotic drive systems promote unequal transmission of alleles from the parental zygote to progeny spores by encoding a poison and an antidote from the same locus; the poison is trans-acting and forms toxic aggregates in all spores within an ascus, wherease the antidote is spore-specific and targets aggregates for degradation by the vacuole. Meiotic drive by wtf systems therefore lead to poisoning of all progeny that do not inherit the dual poison/antidote allele, or express a compatible antidote. This is Meiotic drive suppressor wtf21 from Schizosaccharomyces pombe (strain 972 / ATCC 24843) (Fission yeast).